Reading from the N-terminus, the 263-residue chain is Tryptophan synthase alpha chain (263 aa).

Catalysis depends on proton acceptor residues Glu-46 and Asp-57.

It belongs to the TrpA family. Tetramer of two alpha and two beta chains.

It carries out the reaction (1S,2R)-1-C-(indol-3-yl)glycerol 3-phosphate + L-serine = D-glyceraldehyde 3-phosphate + L-tryptophan + H2O. The protein operates within amino-acid biosynthesis; L-tryptophan biosynthesis; L-tryptophan from chorismate: step 5/5. The alpha subunit is responsible for the aldol cleavage of indoleglycerol phosphate to indole and glyceraldehyde 3-phosphate. This is Tryptophan synthase alpha chain from Bacteroides fragilis (strain ATCC 25285 / DSM 2151 / CCUG 4856 / JCM 11019 / LMG 10263 / NCTC 9343 / Onslow / VPI 2553 / EN-2).